A 478-amino-acid polypeptide reads, in one-letter code: Vitronectin (478 aa).

Positions M1 to A19 are cleaved as a signal peptide. Residues D20–T63 form the SMB domain. 7 disulfides stabilise this stretch: C24–C28, C24–C40, C28–C58, C38–C40, C38–C51, C44–C50, and C51–C58. Residues R64–D66 carry the Cell attachment site motif. T69 carries the post-translational modification Phosphothreonine; by CK2; in vitro. Y75 is subject to Sulfotyrosine. At T76 the chain carries Phosphothreonine; by CK2; in vitro. Y78 carries the sulfotyrosine modification. N86 carries N-linked (GlcNAc...) (complex) asparagine glycosylation. A disordered region spans residues E91–G158. Polar residues predominate over residues S97 to Q112. Phosphoserine is present on residues S130 and S137. Residues E133–H143 show a composition bias toward basic and acidic residues. Hemopexin repeat units lie at residues G158–I202, E203–I250, and P251–F305. An N-linked (GlcNAc...) asparagine glycan is attached at N169. N242 carries an N-linked (GlcNAc...) (complex) asparagine glycan. Y282 carries the post-translational modification Sulfotyrosine. C293 and C430 form a disulfide bridge. A Phosphoserine modification is found at S312. Residues R362–R395 form a heparin-binding region. The interval S364–R398 is disordered. Residues L365–G388 show a composition bias toward basic residues. S397 bears the Phosphoserine; by PKA mark. Residues Y417 and Y420 each carry the sulfotyrosine modification. The stretch at D419–C472 is one Hemopexin 4 repeat.

As to quaternary structure, exists in two forms: a single chain 75 kDa form (V75) and a clipped form composed of two chains (65 kDa and 10 kDa) (V65+V10) which are held together by a disulfide bond. Interacts with SERPINE1/PAI1, insulin and C1QBP. (Microbial infection) Interacts (via hemopexin repeat 2) with P.falciparum (isolate CDC / Honduras) SERA5 P47 (via C-terminus); may form heterotetramers of two VTN and SERA5 P47 heterodimers; the interaction may protect merozoites from phagocytosis by host monocytes; VTN glycosylation appears to be dispensable for the interaction. Post-translationally, sulfated on tyrosine residues. In terms of processing, N- and O-glycosylated. Phosphorylation on Thr-69 and Thr-76 favors cell adhesion and spreading. Post-translationally, it has been suggested that the active SMB domain may be permitted considerable disulfide bond heterogeneity or variability, thus two alternate disulfide patterns based on 3D structures are described with 1 disulfide bond conserved in both. In terms of processing, phosphorylation sites are present in the extracellular medium. Expressed in the retina pigment epithelium (at protein level). Expressed in plasma (at protein level). Expressed in serum (at protein level).

The protein localises to the secreted. It is found in the extracellular space. It localises to the parasitophorous vacuole. In terms of biological role, vitronectin is a cell adhesion and spreading factor found in serum and tissues. Vitronectin interact with glycosaminoglycans and proteoglycans. Is recognized by certain members of the integrin family and serves as a cell-to-substrate adhesion molecule. Inhibitor of the membrane-damaging effect of the terminal cytolytic complement pathway. Its function is as follows. Somatomedin-B is a growth hormone-dependent serum factor with protease-inhibiting activity. The sequence is that of Vitronectin (VTN) from Homo sapiens (Human).